A 158-amino-acid polypeptide reads, in one-letter code: Rhombotin-2 (158 aa).

LIM zinc-binding domains follow at residues 30–89 and 94–153; these read CGGC…RLFG and CASC…EWTK.

As to quaternary structure, interacts via its LIM domains with ELF2 and LDB1. Interacts with BEX2 and KDM5A. Also interacts with basic helix-loop-helix protein TAL1/SCL and can assemble in a complex with LMO2 and TAL1/SCL.

The protein resides in the nucleus. In terms of biological role, acts with TAL1/SCL to regulate red blood cell development. Also acts with LDB1 to maintain erythroid precursors in an immature state. In Bos taurus (Bovine), this protein is Rhombotin-2 (LMO2).